The sequence spans 337 residues: DNA-directed RNA polymerase subunit alpha (337 aa).

Positions 1–233 are alpha N-terminal domain (alpha-NTD); that stretch reads MIQKNWQELI…DQLSIFVNFE (233 aa). The interval 249–337 is alpha C-terminal domain (alpha-CTD); the sequence is FNPALLKKVD…DLAKRYEDQY (89 aa).

The protein belongs to the RNA polymerase alpha chain family. In terms of assembly, homodimer. The RNAP catalytic core consists of 2 alpha, 1 beta, 1 beta' and 1 omega subunit. When a sigma factor is associated with the core the holoenzyme is formed, which can initiate transcription.

The enzyme catalyses RNA(n) + a ribonucleoside 5'-triphosphate = RNA(n+1) + diphosphate. Functionally, DNA-dependent RNA polymerase catalyzes the transcription of DNA into RNA using the four ribonucleoside triphosphates as substrates. The protein is DNA-directed RNA polymerase subunit alpha of Brucella melitensis biotype 2 (strain ATCC 23457).